Reading from the N-terminus, the 391-residue chain is DNA/RNA-binding protein KIN17 (391 aa).

A C2H2-type zinc finger spans residues 28 to 50 (CQMCQKQCRDENGFKCHCMSESH). The interval 51-160 (QRQLLLASEN…RQLELEKKKK (110 aa)) is winged helix-turn-helix (wHTH). K135 carries the post-translational modification N6,N6,N6-trimethyllysine; by METTL22; alternate. K135 carries the N6-methyllysine; alternate modification. Coiled coils occupy residues 147 to 180 (ETIR…VRRG) and 252 to 275 (AKKK…TART). The tract at residues 206–258 (NLNKGAGGSAGATTSKSSSLGPSALKLLGSAASGKRKESSQSSAQPAKKKKSA) is disordered. A C-terminal subdomain A region spans residues 282–332 (GIVVKIITKKLGEKYHKKKGVVKEVIDRYTAVVKMTDSGDRLKLDQTHLET). The segment at 338 to 389 (GKRVLVLNGGYRGNEGTLESINEKAFSATIVIETGPLKGRRVEGIQYEDISK) is C-terminal subdomain B.

It belongs to the KIN17 family. In terms of assembly, associated with DNA polymerase alpha, RFC1 and cyclin A, in multiprotein DNA replication complexes. Also associates with replication origins at the G1/S phase boundary and throughout the S phase in vivo. In terms of tissue distribution, highly expressed in transformed mouse AtT20 neuroendocrine cells. Expressed at a lower level in testis, kidney, skeletal muscle, liver, lung, spleen, brain and heart and kidney. In testis, expressed at much higher levels in proliferating cells than in differentiating cells. Not detected in embryo.

The protein resides in the nucleus. Its subcellular location is the cytoplasm. Functionally, involved in DNA replication and the cellular response to DNA damage. May participate in DNA replication factories and create a bridge between DNA replication and repair mediated by high molecular weight complexes. May play a role in illegitimate recombination and regulation of gene expression. May participate in mRNA processing. Binds, in vitro, to double-stranded DNA. Also shown to bind preferentially to curved DNA in vitro and in vivo. Binds via its C-terminal domain to RNA in vitro. The sequence is that of DNA/RNA-binding protein KIN17 from Mus musculus (Mouse).